Here is a 577-residue protein sequence, read N- to C-terminus: Sensor protein ChvG (577 aa).

Topologically, residues Met-1–Arg-29 are cytoplasmic. Residues Ile-30 to Gln-50 form a helical membrane-spanning segment. Residues Phe-51–Arg-260 lie on the Periplasmic side of the membrane. The chain crosses the membrane as a helical span at residues Leu-261 to Leu-281. Residues Ser-282 to Pro-577 lie on the Cytoplasmic side of the membrane. The region spanning Ser-283 to Ala-339 is the HAMP domain. Residues Asp-347–Pro-575 enclose the Histidine kinase domain. A Phosphohistidine modification is found at His-350.

In terms of assembly, homodimer.

The protein localises to the cell inner membrane. The catalysed reaction is ATP + protein L-histidine = ADP + protein N-phospho-L-histidine.. The protein operates within glycan metabolism; exopolysaccharide biosynthesis. Its function is as follows. Member of a two-component regulatory system ChvG(ExoS)/ChvI involved in regulating the production of succinoglycan. Activates ChvI by phosphorylation. This Rhizobium meliloti (strain 1021) (Ensifer meliloti) protein is Sensor protein ChvG (chvG).